Here is a 373-residue protein sequence, read N- to C-terminus: tRNA-specific 2-thiouridylase MnmA (373 aa).

ATP-binding positions include 12–19 (GMSGGVDS) and Met-38. The interval 98–100 (NPD) is interaction with target base in tRNA. The Nucleophile role is filled by Cys-103. An intrachain disulfide couples Cys-103 to Cys-200. Gly-127 provides a ligand contact to ATP. The interaction with tRNA stretch occupies residues 150-152 (KDQ). Cys-200 acts as the Cysteine persulfide intermediate in catalysis. The tract at residues 312-313 (RY) is interaction with tRNA.

The protein belongs to the MnmA/TRMU family.

Its subcellular location is the cytoplasm. The enzyme catalyses S-sulfanyl-L-cysteinyl-[protein] + uridine(34) in tRNA + AH2 + ATP = 2-thiouridine(34) in tRNA + L-cysteinyl-[protein] + A + AMP + diphosphate + H(+). Its function is as follows. Catalyzes the 2-thiolation of uridine at the wobble position (U34) of tRNA, leading to the formation of s(2)U34. This Streptococcus sanguinis (strain SK36) protein is tRNA-specific 2-thiouridylase MnmA.